A 555-amino-acid polypeptide reads, in one-letter code: Glycerol dehydratase large subunit (555 aa).

The protein belongs to the diol/glycerol dehydratase large subunit family. Probably consists of three subunits: large, medium, and small. Requires adenosylcob(III)alamin as cofactor.

It carries out the reaction glycerol = 3-hydroxypropanal + H2O. This is Glycerol dehydratase large subunit (dhaB) from Citrobacter freundii.